Here is a 256-residue protein sequence, read N- to C-terminus: Transcription factor CAULIFLOWER (256 aa).

The region spanning 1-61 (MGRGRVQLKR…GKLFEYTSES (61 aa)) is the MADS-box domain. Residues 90–180 (QPNWSMEYSR…TKQIKERENI (91 aa)) form the K-box domain.

In terms of assembly, homodimer capable of binding to CArG-box sequences.

Its subcellular location is the nucleus. Probable transcription factor that promotes early floral meristem identity in synergy with APETALA1, FRUITFULL and LEAFY. Is required subsequently for the transition of an inflorescence meristem into a floral meristem. Seems to be partially redundant to the function of APETALA1. The chain is Transcription factor CAULIFLOWER (CAL) from Arabidopsis lyrata subsp. lyrata (Lyre-leaved rock-cress).